A 622-amino-acid polypeptide reads, in one-letter code: Chaperone protein HscA homolog (622 aa).

This sequence belongs to the heat shock protein 70 family.

Chaperone involved in the maturation of iron-sulfur cluster-containing proteins. Has a low intrinsic ATPase activity which is markedly stimulated by HscB. This chain is Chaperone protein HscA homolog, found in Burkholderia pseudomallei (strain K96243).